The chain runs to 530 residues: Arginine--tRNA ligase (530 aa).

Residues 113–123 carry the 'HIGH' region motif; sequence ANPTGPLHIGH.

The protein belongs to the class-I aminoacyl-tRNA synthetase family. Monomer.

It localises to the cytoplasm. It carries out the reaction tRNA(Arg) + L-arginine + ATP = L-arginyl-tRNA(Arg) + AMP + diphosphate. This Campylobacter jejuni subsp. jejuni serotype O:2 (strain ATCC 700819 / NCTC 11168) protein is Arginine--tRNA ligase.